Here is a 541-residue protein sequence, read N- to C-terminus: Membrane protein insertase YidC (541 aa).

Helical transmembrane passes span 6-26 (FFLI…WEIT), 356-376 (IIHS…LAFY), 430-450 (LPIL…LEMV), 463-483 (LSAP…MFIQ), and 498-518 (IMMA…SGLV).

Belongs to the OXA1/ALB3/YidC family. Type 1 subfamily. Interacts with the Sec translocase complex via SecD. Specifically interacts with transmembrane segments of nascent integral membrane proteins during membrane integration.

It is found in the cell inner membrane. In terms of biological role, required for the insertion and/or proper folding and/or complex formation of integral membrane proteins into the membrane. Involved in integration of membrane proteins that insert both dependently and independently of the Sec translocase complex, as well as at least some lipoproteins. Aids folding of multispanning membrane proteins. The chain is Membrane protein insertase YidC from Vesicomyosocius okutanii subsp. Calyptogena okutanii (strain HA).